The following is a 551-amino-acid chain: mRNA cap guanine-N(7) methyltransferase (551 aa).

Polar residues predominate over residues M1–P10. The tract at residues M1–E152 is disordered. 2 stretches are compositionally biased toward basic and acidic residues: residues V48–H76 and L141–E152. The mRNA cap 0 methyltransferase domain occupies S194 to V551. MRNA is bound at residue N203–N204. S-adenosyl-L-methionine contacts are provided by residues K207, G250, D274, D312, M355–A357, and Y360. The disordered stretch occupies residues K407–D430. Over residues A408 to E420 the composition is skewed to basic and acidic residues. Residues A421–D430 are compositionally biased toward acidic residues.

The protein belongs to the class I-like SAM-binding methyltransferase superfamily. mRNA cap 0 methyltransferase family.

The protein localises to the nucleus. The enzyme catalyses a 5'-end (5'-triphosphoguanosine)-ribonucleoside in mRNA + S-adenosyl-L-methionine = a 5'-end (N(7)-methyl 5'-triphosphoguanosine)-ribonucleoside in mRNA + S-adenosyl-L-homocysteine. Functionally, responsible for methylating the 5'-cap structure of mRNAs. The protein is mRNA cap guanine-N(7) methyltransferase (abd1) of Aspergillus clavatus (strain ATCC 1007 / CBS 513.65 / DSM 816 / NCTC 3887 / NRRL 1 / QM 1276 / 107).